The sequence spans 757 residues: E3 ubiquitin-protein ligase SMURF1 (757 aa).

The C2 domain maps to 1 to 120; sequence MSNPGTRRNG…TGYQRLDLCK (120 aa). The segment at 193 to 237 is disordered; that stretch reads GNCRFVESPSQDQRLQAQRLRNPDVRGSLQTPQNRPHGHQSPELP. Ser200 bears the Phosphoserine mark. WW domains lie at 234 to 267 and 306 to 339; these read PELPEGYEQRTTVQGQVYFLHTQTGVSTWHDPRI and GPLPPGWEVRSTVSGRIYFVDHNNRTTQFTDPRL. Residues Lys381 and Lys383 each participate in a glycyl lysine isopeptide (Lys-Gly) (interchain with G-Cter in ubiquitin) cross-link. One can recognise an HECT domain in the interval 420 to 757; that stretch reads RPKDLKKRLM…VEETCGFAVE (338 aa). Cys725 acts as the Glycyl thioester intermediate in catalysis.

As to quaternary structure, interacts with TRAF4. Interacts (via HECT domain) with FBXL15 (via LRR repeats). Interacts with SMAD7 and TGFBR1; SMAD7 recruits SMURF1 to TGFBR1 and regulates TGF-beta receptor degradation. Interacts with MAVS; the interaction is mediated by NDFIP1. Auto-ubiquitinated in presence of NDFIP1. Ubiquitinated by the SCF(FBXL15) complex at Lys-381 and Lys-383, leading to its degradation by the proteasome. Lys-383 is the primary ubiquitination site. Expressed in melanocytes.

The protein resides in the cytoplasm. The protein localises to the cell membrane. The catalysed reaction is S-ubiquitinyl-[E2 ubiquitin-conjugating enzyme]-L-cysteine + [acceptor protein]-L-lysine = [E2 ubiquitin-conjugating enzyme]-L-cysteine + N(6)-ubiquitinyl-[acceptor protein]-L-lysine.. It participates in protein modification; protein ubiquitination. In terms of biological role, E3 ubiquitin-protein ligase that acts as a negative regulator of BMP signaling pathway. Mediates ubiquitination and degradation of SMAD1 and SMAD5, 2 receptor-regulated SMADs specific for the BMP pathway. Promotes ubiquitination and subsequent proteasomal degradation of TRAF family members and RHOA. Promotes ubiquitination and subsequent proteasomal degradation of MAVS. Acts as an antagonist of TGF-beta signaling by ubiquitinating TGFBR1 and targeting it for degradation. Plays a role in dendrite formation by melanocytes. The chain is E3 ubiquitin-protein ligase SMURF1 (SMURF1) from Homo sapiens (Human).